A 510-amino-acid chain; its full sequence is NAD(P)H-quinone oxidoreductase subunit 2 A, chloroplastic (510 aa).

A run of 13 helical transmembrane segments spans residues 24-44, 57-77, 99-119, 124-144, 149-169, 183-203, 227-247, 295-315, 323-343, 354-374, 395-415, 418-438, and 484-504; these read LLLFDGSLIFPECILIFGLIL, IPWLYFISSTSLVMSITALLF, IFQFLILLCSTLCIPLSVEYI, MAITEFLLFVLTATLGGMFLC, LITIFVAPECFSLCSYLLSGY, YLLMGGASSSILVHGFSWLYG, PGISIALIFITVGIGFKLSPA, WHLLLEILAILSMILGNLIAI, MLAYSSIGQIGYVIIGIIVGD, YMLFYISMNLGTFACIVLFGL, ALSLALCLLSLGGLPPLAGFF, LYLFWCGWQAGLYFLVLIGLL, and MIVCVIASTIPGISMNPIIAI.

This sequence belongs to the complex I subunit 2 family. As to quaternary structure, NDH is composed of at least 16 different subunits, 5 of which are encoded in the nucleus.

The protein localises to the plastid. Its subcellular location is the chloroplast thylakoid membrane. The catalysed reaction is a plastoquinone + NADH + (n+1) H(+)(in) = a plastoquinol + NAD(+) + n H(+)(out). It catalyses the reaction a plastoquinone + NADPH + (n+1) H(+)(in) = a plastoquinol + NADP(+) + n H(+)(out). NDH shuttles electrons from NAD(P)H:plastoquinone, via FMN and iron-sulfur (Fe-S) centers, to quinones in the photosynthetic chain and possibly in a chloroplast respiratory chain. The immediate electron acceptor for the enzyme in this species is believed to be plastoquinone. Couples the redox reaction to proton translocation, and thus conserves the redox energy in a proton gradient. This chain is NAD(P)H-quinone oxidoreductase subunit 2 A, chloroplastic, found in Solanum bulbocastanum (Wild potato).